Reading from the N-terminus, the 524-residue chain is Inosine-5'-monophosphate dehydrogenase (524 aa).

2 consecutive CBS domains span residues 121–180 (FILD…NTPV) and 184–242 (MTPR…PLAS). Residues 280–282 (DSS) and 330–332 (GMG) contribute to the NAD(+) site. Positions 332 and 334 each coordinate K(+). An IMP-binding site is contributed by serine 335. Cysteine 337 contacts K(+). The active-site Thioimidate intermediate is cysteine 337. IMP is bound by residues 370 to 372 (DGG), 393 to 394 (GG), and 417 to 421 (YRGMG). Residue arginine 439 is the Proton acceptor of the active site. Glutamine 451 is an IMP binding site. 2 residues coordinate K(+): glutamate 510 and glycine 511.

The protein belongs to the IMPDH/GMPR family. Homotetramer. K(+) serves as cofactor.

It is found in the cytoplasm. It carries out the reaction IMP + NAD(+) + H2O = XMP + NADH + H(+). It participates in purine metabolism; XMP biosynthesis via de novo pathway; XMP from IMP: step 1/1. With respect to regulation, mycophenolic acid (MPA) is a non-competitive inhibitor that prevents formation of the closed enzyme conformation by binding to the same site as the amobile flap. In contrast, mizoribine monophosphate (MZP) is a competitive inhibitor that induces the closed conformation. MPA is a potent inhibitor of mammalian IMPDHs but a poor inhibitor of the bacterial enzymes. MZP is a more potent inhibitor of bacterial IMPDH. Catalyzes the conversion of inosine 5'-phosphate (IMP) to xanthosine 5'-phosphate (XMP), the first committed and rate-limiting step in the de novo synthesis of guanine nucleotides, and therefore plays an important role in the regulation of cell growth. This Schizosaccharomyces pombe (strain 972 / ATCC 24843) (Fission yeast) protein is Inosine-5'-monophosphate dehydrogenase (gua1).